Reading from the N-terminus, the 352-residue chain is Photosystem II D2 protein (352 aa).

A helical membrane pass occupies residues 40–60; the sequence is CAFMALGGWLTGTTFVTSWYT. Chlorophyll a is bound at residue His-117. Residues 124 to 140 form a helical membrane-spanning segment; the sequence is GFMLRQFEIARLVGIRP. The pheophytin a site is built by Gln-129 and Asn-142. Residues 152-165 form a helical membrane-spanning segment; the sequence is VFVSVFLMYPLGQS. Residue His-197 participates in chlorophyll a binding. A helical membrane pass occupies residues 207–227; that stretch reads GALLCAIHGATVENTLFEDSD. Residues His-214 and Phe-261 each coordinate a plastoquinone. His-214 is a Fe cation binding site. A Fe cation-binding site is contributed by His-268. The chain crosses the membrane as a helical span at residues 278–294; it reads GLWMSSVGIVGLALNLR.

This sequence belongs to the reaction center PufL/M/PsbA/D family. As to quaternary structure, PSII is composed of 1 copy each of membrane proteins PsbA, PsbB, PsbC, PsbD, PsbE, PsbF, PsbH, PsbI, PsbJ, PsbK, PsbL, PsbM, PsbT, PsbX, PsbY, PsbZ, Psb30/Ycf12, peripheral proteins PsbO, CyanoQ (PsbQ), PsbU, PsbV and a large number of cofactors. It forms dimeric complexes. Requires The D1/D2 heterodimer binds P680, chlorophylls that are the primary electron donor of PSII, and subsequent electron acceptors. It shares a non-heme iron and each subunit binds pheophytin, quinone, additional chlorophylls, carotenoids and lipids. There is also a Cl(-1) ion associated with D1 and D2, which is required for oxygen evolution. The PSII complex binds additional chlorophylls, carotenoids and specific lipids. as cofactor.

The protein localises to the cellular thylakoid membrane. The catalysed reaction is 2 a plastoquinone + 4 hnu + 2 H2O = 2 a plastoquinol + O2. Photosystem II (PSII) is a light-driven water:plastoquinone oxidoreductase that uses light energy to abstract electrons from H(2)O, generating O(2) and a proton gradient subsequently used for ATP formation. It consists of a core antenna complex that captures photons, and an electron transfer chain that converts photonic excitation into a charge separation. The D1/D2 (PsbA/PsbD) reaction center heterodimer binds P680, the primary electron donor of PSII as well as several subsequent electron acceptors. D2 is needed for assembly of a stable PSII complex. The chain is Photosystem II D2 protein from Picosynechococcus sp. (strain ATCC 27264 / PCC 7002 / PR-6) (Agmenellum quadruplicatum).